A 495-amino-acid chain; its full sequence is Growth/differentiation factor 5 (495 aa).

Residues Met1–Gly27 form the signal peptide. Residues Ala28–Arg375 constitute a propeptide that is removed on maturation. Residues Asp30–Thr162 form a disordered region. Residues Gly124 to Ser137 show a composition bias toward low complexity. Positions Lys142–Phe156 are enriched in basic and acidic residues. Asn183 carries an N-linked (GlcNAc...) asparagine glycan. 3 cysteine pairs are disulfide-bonded: Cys394–Cys460, Cys423–Cys492, and Cys427–Cys494.

It belongs to the TGF-beta family. Homodimer; disulfide-linked. Interacts with serine proteases, HTRA1 and HTRA3. Following LPS binding, may form a complex with CXCR4, HSP90AA1 and HSPA8. Interacts with high affinity with NOG; inhibits chondrogenesis. Interacts with high affinity with BMPR1B and lower affinity with BMPR1A; positively regulates chondrocyte differentiation and induces SMAD-dependent signaling. Interacts with FBN1 (via N-terminal domain) and FBN2. Interacts with TGFBR3.

The protein resides in the secreted. Its subcellular location is the cell membrane. In terms of biological role, growth factor involved in bone and cartilage formation. During cartilage development regulates differentiation of chondrogenic tissue through two pathways. Firstly, positively regulates differentiation of chondrogenic tissue through its binding of high affinity with BMPR1B and of less affinity with BMPR1A, leading to induction of SMAD1-SMAD5-SMAD8 complex phosphorylation and then SMAD protein signaling transduction. Secondly, negatively regulates chondrogenic differentiation through its interaction with NOG. Required to prevent excessive muscle loss upon denervation. This function requires SMAD4 and is mediated by phosphorylated SMAD1/5/8. Binds bacterial lipopolysaccharide (LPS) and mediates LPS-induced inflammatory response, including TNF secretion by monocytes. The protein is Growth/differentiation factor 5 (Gdf5) of Mus musculus (Mouse).